Here is a 196-residue protein sequence, read N- to C-terminus: Putative manganese efflux pump MntP (196 aa).

6 helical membrane passes run proline 3–glycine 23, isoleucine 39–histidine 59, glycine 67–alanine 87, isoleucine 109–threonine 129, isoleucine 137–leucine 157, and isoleucine 172–glycine 192.

Belongs to the MntP (TC 9.B.29) family.

It is found in the cell inner membrane. Probably functions as a manganese efflux pump. The polypeptide is Putative manganese efflux pump MntP (Chromohalobacter salexigens (strain ATCC BAA-138 / DSM 3043 / CIP 106854 / NCIMB 13768 / 1H11)).